Reading from the N-terminus, the 413-residue chain is MLTMPIPEYLHEILDDVRDTTSGELADYIPELKSADPNPLAVALCTVNGHIYSAGDDDIEFTMQSISKPFAYALALQECGFDEVSASVALEPSGEAFNELSLDGENRPMNPMINAGAIAINQLINGSDSTVEDRVEKIRHYFSELAGRELTIDRVLAESELAGADRNLSIAHMLRNYGVIEDEAHDAVLSYTLQCAIKVTTRDLAVMTATLAAGGTHPITGKKLLDARVCRLTLSVMASAGMYDEAGQWLSTVGIPAKSGVAGGLIGILPGQLGIATFSPRLNPKGNSVRGVKIFKQLSDDMGLHLMSTEQVSGHAVRSITRDGDTTFIQMQGAMNFSASESFLHAIVEHNFEGTEVVLDLTRVLSFHPVAIRMIKEGLKRIRDAGFEVFILDPDDVLPDFMFSDGTICKERV.

Positions 23–307 are glutaminase; that stretch reads GELADYIPEL…LSDDMGLHLM (285 aa). Ser65, Asn114, Glu160, Asn167, Tyr191, Tyr243, and Val261 together coordinate substrate. An STAS domain is found at 316-413; the sequence is AVRSITRDGD…SDGTICKERV (98 aa).

This sequence belongs to the glutaminase family. Homotetramer.

It carries out the reaction L-glutamine + H2O = L-glutamate + NH4(+). In Corynebacterium glutamicum (strain ATCC 13032 / DSM 20300 / JCM 1318 / BCRC 11384 / CCUG 27702 / LMG 3730 / NBRC 12168 / NCIMB 10025 / NRRL B-2784 / 534), this protein is Glutaminase (glsA).